The following is a 123-amino-acid chain: Aberrant microtubules protein 1 (123 aa).

In terms of biological role, required for normal microtubule organization. The sequence is that of Aberrant microtubules protein 1 (ABM1) from Saccharomyces cerevisiae (strain ATCC 204508 / S288c) (Baker's yeast).